The sequence spans 1037 residues: Presequence protease, mitochondrial (1037 aa).

The transit peptide at 1–15 directs the protein to the mitochondrion; the sequence is MWRCGGRQGLGVLRR. His104 lines the Zn(2+) pocket. The Proton acceptor role is filled by Glu107. His108 and Glu205 together coordinate Zn(2+). Cys119 and Cys556 form a disulfide bridge. Lys759 is modified (N6-acetyllysine). Position 770 is an N6-acetyllysine; alternate (Lys770). Lys770 bears the N6-succinyllysine; alternate mark. The disordered stretch occupies residues 803 to 834; it reads IGRSKKERRPVRPHTVEKPVPSSSGGDAHVPH. Residues 804–814 are compositionally biased toward basic residues; the sequence is GRSKKERRPVR. Lys849 is modified (N6-succinyllysine). Lys884 is subject to N6-acetyllysine. An N6-succinyllysine modification is found at Lys946.

The protein belongs to the peptidase M16 family. PreP subfamily. As to quaternary structure, monomer and homodimer; homodimerization is induced by binding of the substrate. Requires Zn(2+) as cofactor. A disulfide bond locks the enzyme in the closed conformation preventing substrate entry into the catalytic chamber.

It is found in the mitochondrion matrix. Mainly exists in a closed and catalytically competent conformation but a closed-to-open switch allows substrate entry into the catalytic chamber. Substrate binding induces closure and dimerization. A disulfide bond may lock the enzyme in a closed conformation preventing substrate entry into the catalytic chamber, participating in redox regulation of the enzyme. Inhibited by metal-chelating agents. Inhibited by nickel and zinc excess, and slightly activated by manganese. Functionally, metalloendopeptidase of the mitochondrial matrix that functions in peptide cleavage and degradation rather than in protein processing. Has an ATP-independent activity. Specifically cleaves peptides in the range of 5 to 65 residues. Shows a preference for cleavage after small polar residues and before basic residues, but without any positional preference. Degrades the transit peptides of mitochondrial proteins after their cleavage. Also degrades other unstructured peptides. It is also able to degrade amyloid-beta protein 40, one of the peptides produced by APP processing, when it accumulates in mitochondrion. It is a highly efficient protease, at least toward amyloid-beta protein 40. Cleaves that peptide at a specific position and is probably not processive, releasing digested peptides intermediates that can be further cleaved subsequently. It is also able to degrade amyloid-beta protein 42. This is Presequence protease, mitochondrial from Pongo abelii (Sumatran orangutan).